A 488-amino-acid polypeptide reads, in one-letter code: Glutamate--tRNA ligase (488 aa).

Residues 16–26 (PSPTGEPHVGT) carry the 'HIGH' region motif. The 'KMSKS' region motif lies at 257–261 (KLSKR). Lys-260 contacts ATP.

It belongs to the class-I aminoacyl-tRNA synthetase family. Glutamate--tRNA ligase type 1 subfamily. Monomer.

It is found in the cytoplasm. It catalyses the reaction tRNA(Glu) + L-glutamate + ATP = L-glutamyl-tRNA(Glu) + AMP + diphosphate. Functionally, catalyzes the attachment of glutamate to tRNA(Glu) in a two-step reaction: glutamate is first activated by ATP to form Glu-AMP and then transferred to the acceptor end of tRNA(Glu). The chain is Glutamate--tRNA ligase from Rhizobium etli (strain ATCC 51251 / DSM 11541 / JCM 21823 / NBRC 15573 / CFN 42).